The primary structure comprises 433 residues: Probable phosphoglucosamine mutase (433 aa).

Ser91 acts as the Phosphoserine intermediate in catalysis. Residues Ser91, Asp229, Asp231, and Asp233 each coordinate Mg(2+). Position 91 is a phosphoserine (Ser91).

This sequence belongs to the phosphohexose mutase family. The cofactor is Mg(2+). Post-translationally, activated by phosphorylation.

It carries out the reaction alpha-D-glucosamine 1-phosphate = D-glucosamine 6-phosphate. In terms of biological role, catalyzes the conversion of glucosamine-6-phosphate to glucosamine-1-phosphate. This Methanococcoides burtonii (strain DSM 6242 / NBRC 107633 / OCM 468 / ACE-M) protein is Probable phosphoglucosamine mutase.